Here is a 249-residue protein sequence, read N- to C-terminus: V-type proton ATPase subunit D 2 (249 aa).

It belongs to the V-ATPase D subunit family. V-ATPase is a heteromultimeric enzyme made up of two complexes: the ATP-hydrolytic V1 complex and the proton translocation V0 complex. The V1 complex consists of three catalytic AB heterodimers that form a heterohexamer, three peripheral stalks each consisting of EG heterodimers, one central rotor including subunits D and F, and the regulatory subunits C and H. The proton translocation complex V0 consists of the proton transport subunit a, a ring of proteolipid subunits c9c'', rotary subunit d, subunits e and f, and the accessory subunits VhaAC45 and ATP6AP2.

In terms of biological role, subunit of the V1 complex of vacuolar(H+)-ATPase (V-ATPase), a multisubunit enzyme composed of a peripheral complex (V1) that hydrolyzes ATP and a membrane integral complex (V0) that translocates protons. V-ATPase is responsible for acidifying and maintaining the pH of intracellular compartments and in some cell types, is targeted to the plasma membrane, where it is responsible for acidifying the extracellular environment. This Drosophila melanogaster (Fruit fly) protein is V-type proton ATPase subunit D 2 (Vha36-3).